We begin with the raw amino-acid sequence, 149 residues long: 3-dehydroquinate dehydratase (149 aa).

The Proton acceptor role is filled by Tyr-26. The substrate site is built by Asn-77, His-83, and Asp-90. His-103 (proton donor) is an active-site residue. Residues 104 to 105 and Arg-114 contribute to the substrate site; that span reads LS.

The protein belongs to the type-II 3-dehydroquinase family. Homododecamer.

It carries out the reaction 3-dehydroquinate = 3-dehydroshikimate + H2O. The protein operates within metabolic intermediate biosynthesis; chorismate biosynthesis; chorismate from D-erythrose 4-phosphate and phosphoenolpyruvate: step 3/7. Catalyzes a trans-dehydration via an enolate intermediate. This is 3-dehydroquinate dehydratase from Vibrio parahaemolyticus serotype O3:K6 (strain RIMD 2210633).